Here is a 168-residue protein sequence, read N- to C-terminus: NADH dehydrogenase [ubiquinone] 1 alpha subcomplex assembly factor 2 (168 aa).

Residues 112-168 (GKETSEELLPSPTATQVKGHASAPYFGREEPSVAPTSTGKTFQPGSWTPEDGKRQSQ) form a disordered region. The residue at position 133 (S133) is a Phosphoserine. Over residues 145–157 (APTSTGKTFQPGS) the composition is skewed to polar residues.

The protein belongs to the complex I NDUFA12 subunit family. Interacts with ARMC9.

The protein localises to the mitochondrion. Functionally, acts as a molecular chaperone for mitochondrial complex I assembly. Complex I functions in the transfer of electrons from NADH to the respiratory chain. The immediate electron acceptor for the enzyme is believed to be ubiquinone. Is involved in the initial steps of cilia formation, including removal of CP110 from the mother centrioles, docking of membrane vesicles to the mother centrioles, and establishment of the transition zone. In Mus musculus (Mouse), this protein is NADH dehydrogenase [ubiquinone] 1 alpha subcomplex assembly factor 2 (Ndufaf2).